Consider the following 268-residue polypeptide: Hydroxyacylglutathione hydrolase (268 aa).

Zn(2+) is bound by residues His56, His58, Asp60, His61, His113, Asp130, and His168.

It belongs to the metallo-beta-lactamase superfamily. Glyoxalase II family. As to quaternary structure, monomer. Requires Zn(2+) as cofactor.

The catalysed reaction is an S-(2-hydroxyacyl)glutathione + H2O = a 2-hydroxy carboxylate + glutathione + H(+). The protein operates within secondary metabolite metabolism; methylglyoxal degradation; (R)-lactate from methylglyoxal: step 2/2. Thiolesterase that catalyzes the hydrolysis of S-D-lactoyl-glutathione to form glutathione and D-lactic acid. This chain is Hydroxyacylglutathione hydrolase, found in Hydrogenovibrio crunogenus (strain DSM 25203 / XCL-2) (Thiomicrospira crunogena).